The sequence spans 69 residues: UPF0248 protein AF_0420 (69 aa).

Belongs to the UPF0248 family.

This Archaeoglobus fulgidus (strain ATCC 49558 / DSM 4304 / JCM 9628 / NBRC 100126 / VC-16) protein is UPF0248 protein AF_0420.